Here is a 418-residue protein sequence, read N- to C-terminus: Trans-acting enoyl reductase (418 aa).

The protein belongs to the saccharopine dehydrogenase family. Enoyl reductase subfamily.

In terms of biological role, involved in the reduction of the double bond between C-4 and C-5 during phthiocerol dimycocerosates (DIM A) and glycosylated phenolphthiocerol dimycocerosates (PGL) biosynthesis. This is Trans-acting enoyl reductase from Mycobacterium leprae (strain TN).